A 274-amino-acid chain; its full sequence is Large ribosomal subunit protein uL2c (274 aa).

2 disordered regions span residues 1–22 (MAIHLYKTSTPSTRNGAVDNQV) and 225–274 (PVDH…RRSK).

The protein belongs to the universal ribosomal protein uL2 family. In terms of assembly, part of the 50S ribosomal subunit.

Its subcellular location is the plastid. The protein resides in the chloroplast. This is Large ribosomal subunit protein uL2c (rpl2) from Silene latifolia (White campion).